A 712-amino-acid polypeptide reads, in one-letter code: Methylmalonyl-CoA mutase (712 aa).

Substrate contacts are provided by residues 73 to 77, 183 to 185, Arg-195, Lys-222, His-232, and 271 to 273; these read TVRQY, TIQ, and RLS. A B12-binding domain is found at 580-712; that stretch reads KPKIMVAKLG…DLIEGKRRNV (133 aa). His-593 is a binding site for adenosylcob(III)alamin.

It belongs to the methylmalonyl-CoA mutase family. Homodimer. Adenosylcob(III)alamin serves as cofactor. The cofactor is a monovalent cation.

It catalyses the reaction (R)-methylmalonyl-CoA = succinyl-CoA. Its pathway is metabolic intermediate metabolism; propanoyl-CoA degradation; succinyl-CoA from propanoyl-CoA: step 3/3. Radical enzyme that catalyzes the transformation of methylmalonyl-CoA to succinyl-CoA. Is required for growth on the polyhydroxyalkanoate degradation pathway intermediates 3-hydroxybutyrate and acetoacetate as sole carbon source. This is Methylmalonyl-CoA mutase from Rhizobium meliloti (strain 1021) (Ensifer meliloti).